The primary structure comprises 312 residues: Aspartate carbamoyltransferase catalytic subunit (312 aa).

Residues Arg55 and Thr56 each contribute to the carbamoyl phosphate site. Lys83 is an L-aspartate binding site. Carbamoyl phosphate is bound by residues Arg105, His133, and Gln136. L-aspartate-binding residues include Arg166 and Arg220. Residues Gly261 and Pro262 each coordinate carbamoyl phosphate.

Belongs to the aspartate/ornithine carbamoyltransferase superfamily. ATCase family. As to quaternary structure, heterododecamer (2C3:3R2) of six catalytic PyrB chains organized as two trimers (C3), and six regulatory PyrI chains organized as three dimers (R2).

The catalysed reaction is carbamoyl phosphate + L-aspartate = N-carbamoyl-L-aspartate + phosphate + H(+). Its pathway is pyrimidine metabolism; UMP biosynthesis via de novo pathway; (S)-dihydroorotate from bicarbonate: step 2/3. Functionally, catalyzes the condensation of carbamoyl phosphate and aspartate to form carbamoyl aspartate and inorganic phosphate, the committed step in the de novo pyrimidine nucleotide biosynthesis pathway. This is Aspartate carbamoyltransferase catalytic subunit from Prosthecochloris aestuarii (strain DSM 271 / SK 413).